The following is a 68-amino-acid chain: Large ribosomal subunit protein uL29 (68 aa).

The protein belongs to the universal ribosomal protein uL29 family.

The sequence is that of Large ribosomal subunit protein uL29 from Bradyrhizobium sp. (strain BTAi1 / ATCC BAA-1182).